A 100-amino-acid chain; its full sequence is Aspartyl/glutamyl-tRNA(Asn/Gln) amidotransferase subunit C (100 aa).

Belongs to the GatC family. As to quaternary structure, heterotrimer of A, B and C subunits.

It catalyses the reaction L-glutamyl-tRNA(Gln) + L-glutamine + ATP + H2O = L-glutaminyl-tRNA(Gln) + L-glutamate + ADP + phosphate + H(+). It carries out the reaction L-aspartyl-tRNA(Asn) + L-glutamine + ATP + H2O = L-asparaginyl-tRNA(Asn) + L-glutamate + ADP + phosphate + 2 H(+). Its function is as follows. Allows the formation of correctly charged Asn-tRNA(Asn) or Gln-tRNA(Gln) through the transamidation of misacylated Asp-tRNA(Asn) or Glu-tRNA(Gln) in organisms which lack either or both of asparaginyl-tRNA or glutaminyl-tRNA synthetases. The reaction takes place in the presence of glutamine and ATP through an activated phospho-Asp-tRNA(Asn) or phospho-Glu-tRNA(Gln). This Rickettsia africae (strain ESF-5) protein is Aspartyl/glutamyl-tRNA(Asn/Gln) amidotransferase subunit C.